The following is a 214-amino-acid chain: Adenylate kinase (214 aa).

10–15 (GAGKGT) contacts ATP. Residues 30–59 (STGDMFRDHKARGTEIGKQVQAIMDAGGLV) form an NMP region. AMP is bound by residues threonine 31, arginine 36, 57–59 (GLV), 85–88 (GYPR), and glutamine 92. The LID stretch occupies residues 126–163 (GRRSCPRCGAVYHVSQNPPHRAGFCDRDDTALVQREDD). Arginine 127 serves as a coordination point for ATP. Positions 130 and 133 each coordinate Zn(2+). An ATP-binding site is contributed by 136–137 (VY). 2 residues coordinate Zn(2+): cysteine 150 and aspartate 153. AMP contacts are provided by arginine 160 and arginine 171. ATP is bound at residue glycine 199.

Belongs to the adenylate kinase family. In terms of assembly, monomer.

The protein resides in the cytoplasm. It catalyses the reaction AMP + ATP = 2 ADP. Its pathway is purine metabolism; AMP biosynthesis via salvage pathway; AMP from ADP: step 1/1. Catalyzes the reversible transfer of the terminal phosphate group between ATP and AMP. Plays an important role in cellular energy homeostasis and in adenine nucleotide metabolism. This chain is Adenylate kinase, found in Anaeromyxobacter sp. (strain K).